A 116-amino-acid chain; its full sequence is Toxin ICK-10 (116 aa).

A signal peptide spans methionine 1 to alanine 19. 4 disulfides stabilise this stretch: cysteine 56–cysteine 71, cysteine 64–cysteine 77, cysteine 68–cysteine 113, and cysteine 70–cysteine 84.

It belongs to the neurotoxin 25 family. ICK-8 subfamily. As to expression, expressed by the venom gland.

Its subcellular location is the secreted. Ion channel inhibitor. The protein is Toxin ICK-10 of Trittame loki (Brush-footed trapdoor spider).